The sequence spans 596 residues: Elongation factor 4 (596 aa).

Residues 2–184 (KHIRNFSIIA…EIVAKIPPPV (183 aa)) enclose the tr-type G domain. GTP-binding positions include 14 to 19 (DHGKST) and 131 to 134 (NKID).

The protein belongs to the TRAFAC class translation factor GTPase superfamily. Classic translation factor GTPase family. LepA subfamily.

The protein resides in the cell inner membrane. It catalyses the reaction GTP + H2O = GDP + phosphate + H(+). Its function is as follows. Required for accurate and efficient protein synthesis under certain stress conditions. May act as a fidelity factor of the translation reaction, by catalyzing a one-codon backward translocation of tRNAs on improperly translocated ribosomes. Back-translocation proceeds from a post-translocation (POST) complex to a pre-translocation (PRE) complex, thus giving elongation factor G a second chance to translocate the tRNAs correctly. Binds to ribosomes in a GTP-dependent manner. This chain is Elongation factor 4, found in Shewanella denitrificans (strain OS217 / ATCC BAA-1090 / DSM 15013).